The sequence spans 377 residues: uncharacterized protein (377 aa).

Residues 1 to 46 are disordered; it reads MLAGLRRRGSMTTPPGPEIPPPHQGGFYSAGHHPQRPWPETPPPKT. Composition is skewed to pro residues over residues 14–23 and 36–45; these read PPGPEIPPPH and RPWPETPPPK. A helical transmembrane segment spans residues 53 to 73; sequence MLGAVALLAVVGVTVAVTLAV. The interval 77–107 is disordered; the sequence is DKRDAIPPGSGVSGSPTASDIASADDSGPVS.

It is found in the cell inner membrane. In terms of biological role, may be involved in the ESX-1 / type VII specialized secretion system (T7SS), which exports several proteins including EsxA and EsxB. Involved in DNA conjugation in the recipient strain. This is an uncharacterized protein from Mycolicibacterium smegmatis (strain MKD8) (Mycobacterium smegmatis).